A 240-amino-acid polypeptide reads, in one-letter code: Ribonuclease 3 (240 aa).

In terms of domain architecture, RNase III spans 9 to 141; sequence VEEFQKKTGI…LLAAIYLDQG (133 aa). E54 lines the Mg(2+) pocket. D58 is an active-site residue. Mg(2+)-binding residues include D127 and E130. E130 is a catalytic residue. Positions 168-237 constitute a DRBM domain; the sequence is DYKTALQEIV…ARIAYEKLLK (70 aa).

This sequence belongs to the ribonuclease III family. In terms of assembly, homodimer. It depends on Mg(2+) as a cofactor.

It localises to the cytoplasm. The catalysed reaction is Endonucleolytic cleavage to 5'-phosphomonoester.. In terms of biological role, digests double-stranded RNA. Involved in the processing of primary rRNA transcript to yield the immediate precursors to the large and small rRNAs (23S and 16S). Processes some mRNAs, and tRNAs when they are encoded in the rRNA operon. Processes pre-crRNA and tracrRNA of type II CRISPR loci if present in the organism. The chain is Ribonuclease 3 from Thermotoga petrophila (strain ATCC BAA-488 / DSM 13995 / JCM 10881 / RKU-1).